A 57-amino-acid polypeptide reads, in one-letter code: VIHCDAATICPDGTTCCLSPYGVWYCCPFSMGQCCRDGIHCCRHGYHCDSTSTHCLR.

2 disulfides stabilise this stretch: cysteine 4/cysteine 16 and cysteine 10/cysteine 26.

Belongs to the granulin family. In terms of processing, granulins are disulfide bridged. As to expression, ubiquitous.

Its subcellular location is the secreted. Granulins have possible cytokine-like activity. They may play a role in inflammation, wound repair, and tissue remodeling. The sequence is that of Granulin-1 from Cyprinus carpio (Common carp).